Here is a 384-residue protein sequence, read N- to C-terminus: dTDP-dihydrostreptose--streptidine-6-phosphate dihydrostreptosyltransferase (384 aa).

The catalysed reaction is dTDP-L-dihydrostreptose + streptidine 6-phosphate = O-(1-&gt;4)-alpha-L-dihydrostreptosyl-streptidine 6-phosphate + dTDP + H(+). The protein operates within antibiotic biosynthesis; streptomycin biosynthesis. Its function is as follows. Is probably a dihydrostreptosyl glycosyltransferase, involved in the first glycosylation step condensing streptidine-6-phosphate and dihydrostreptose. This chain is dTDP-dihydrostreptose--streptidine-6-phosphate dihydrostreptosyltransferase (strH), found in Streptomyces griseus.